A 360-amino-acid polypeptide reads, in one-letter code: Phospho-N-acetylmuramoyl-pentapeptide-transferase (360 aa).

10 helical membrane-spanning segments follow: residues 25-45, 73-93, 97-117, 128-148, 168-188, 199-219, 236-256, 262-282, 288-308, and 338-358; these read RAIL…PTLI, TMGG…WADL, YVWV…VDDY, LIAK…AVYL, VMPQ…VGTS, GLAI…AYVS, TAEL…FLWF, LVFM…IIAI, LVLF…MLQV, and VIVR…ATLK.

This sequence belongs to the glycosyltransferase 4 family. MraY subfamily. The cofactor is Mg(2+).

The protein localises to the cell inner membrane. The catalysed reaction is UDP-N-acetyl-alpha-D-muramoyl-L-alanyl-gamma-D-glutamyl-meso-2,6-diaminopimeloyl-D-alanyl-D-alanine + di-trans,octa-cis-undecaprenyl phosphate = di-trans,octa-cis-undecaprenyl diphospho-N-acetyl-alpha-D-muramoyl-L-alanyl-D-glutamyl-meso-2,6-diaminopimeloyl-D-alanyl-D-alanine + UMP. Its pathway is cell wall biogenesis; peptidoglycan biosynthesis. In terms of biological role, catalyzes the initial step of the lipid cycle reactions in the biosynthesis of the cell wall peptidoglycan: transfers peptidoglycan precursor phospho-MurNAc-pentapeptide from UDP-MurNAc-pentapeptide onto the lipid carrier undecaprenyl phosphate, yielding undecaprenyl-pyrophosphoryl-MurNAc-pentapeptide, known as lipid I. In Idiomarina loihiensis (strain ATCC BAA-735 / DSM 15497 / L2-TR), this protein is Phospho-N-acetylmuramoyl-pentapeptide-transferase.